Here is a 177-residue protein sequence, read N- to C-terminus: uncharacterized protein (177 aa).

The segment at 1–27 (MSHSRRAAPTQDQCHTPGFPTSRETSG) is disordered.

This is an uncharacterized protein from Homo sapiens (Human).